Here is a 101-residue protein sequence, read N- to C-terminus: Protein S100-A4 (101 aa).

At alanine 2 the chain carries N-acetylalanine. 2 consecutive EF-hand domains span residues 12–47 and 50–85; these read IVST…SFLG and TDEA…IAMM. Ca(2+) is bound by residues lysine 28 and glutamate 33. The residue at position 35 (lysine 35) is an N6-acetyllysine. The Ca(2+) site is built by aspartate 63, asparagine 65, aspartate 67, glutamate 69, and glutamate 74.

The protein belongs to the S-100 family. Homodimer. Interacts with PPFIBP1 in a calcium-dependent mode. Interacts with PGLYRP1; this complex acts as a chemoattractant that promotes lymphocyte movement. Interacts with MYH9; this interaction increases cell motility. Interacts with Annexin 2/ANXA2. Interacts with TP53; this interaction promotes TP53 degradation. Interacts with CCR5 and CXCR3. Interacts with FCGR3A; this interaction inhibits PKC-dependent phosphorylation of FCGR3A. In terms of tissue distribution, specifically expressed in different metastatic cells.

The protein localises to the secreted. Its subcellular location is the nucleus. It is found in the cytoplasm. Calcium-binding protein that plays a role in various cellular processes including motility, angiogenesis, cell differentiation, apoptosis, and autophagy. Increases cell motility and invasiveness by interacting with non-muscle myosin heavy chain (NMMHC) IIA/MYH9. Mechanistically, promotes filament depolymerization and increases the amount of soluble myosin-IIA, resulting in the formation of stable protrusions facilitating chemotaxis. Also modulates the pro-apoptotic function of TP53 by binding to its C-terminal transactivation domain within the nucleus and reducing its protein levels. Within the extracellular space, stimulates cytokine production including granulocyte colony-stimulating factor and CCL24 from T-lymphocytes. In addition, stimulates T-lymphocyte chemotaxis by acting as a chemoattractant complex with PGLYRP1 that promotes lymphocyte migration via CCR5 and CXCR3 receptors. This Mus musculus (Mouse) protein is Protein S100-A4 (S100a4).